The chain runs to 244 residues: MKSLFEQFEIDLYCIIITRFFDVSITTITVYLGLLMVIVIGMYKVSLYKATLIGNNNWQHIGEMIYEFVVDLILEQVGKPGILFFPFIMSLFLFVLTLNVMGLIPLSFTVTGQLLVTFTLAITIMIGITIWGFRIHGIKFLNIFVPSGIEPWLLPLLVFIEIMSYVLRPISLAVRLFANMLAGHLLIHIIGVAAIYLMQFYFIGILPWICVIAFMFLELGIAFLQAYVFVLLTLIYIANIINLH.

7 helical membrane passes run 20–40 (FFDV…VIVI), 81–101 (GILF…LNVM), 113–133 (QLLV…IWGF), 140–160 (FLNI…LVFI), 176–196 (LFAN…AAIY), 202–222 (FIGI…LGIA), and 223–243 (FLQA…IINL).

Belongs to the ATPase A chain family. As to quaternary structure, F-type ATPases have 2 components, CF(1) - the catalytic core - and CF(0) - the membrane proton channel. CF(1) has five subunits: alpha(3), beta(3), gamma(1), delta(1), epsilon(1). CF(0) has three main subunits: a, b and c.

It is found in the mitochondrion inner membrane. Mitochondrial membrane ATP synthase (F(1)F(0) ATP synthase or Complex V) produces ATP from ADP in the presence of a proton gradient across the membrane which is generated by electron transport complexes of the respiratory chain. F-type ATPases consist of two structural domains, F(1) - containing the extramembraneous catalytic core and F(0) - containing the membrane proton channel, linked together by a central stalk and a peripheral stalk. During catalysis, ATP synthesis in the catalytic domain of F(1) is coupled via a rotary mechanism of the central stalk subunits to proton translocation. Key component of the proton channel; it may play a direct role in the translocation of protons across the membrane. This is ATP synthase subunit a (atp6) from Dictyostelium citrinum (Slime mold).